The chain runs to 315 residues: Methionyl-tRNA formyltransferase (315 aa).

113 to 116 (SLLP) contacts (6S)-5,6,7,8-tetrahydrofolate.

This sequence belongs to the Fmt family.

The catalysed reaction is L-methionyl-tRNA(fMet) + (6R)-10-formyltetrahydrofolate = N-formyl-L-methionyl-tRNA(fMet) + (6S)-5,6,7,8-tetrahydrofolate + H(+). Its function is as follows. Attaches a formyl group to the free amino group of methionyl-tRNA(fMet). The formyl group appears to play a dual role in the initiator identity of N-formylmethionyl-tRNA by promoting its recognition by IF2 and preventing the misappropriation of this tRNA by the elongation apparatus. This is Methionyl-tRNA formyltransferase from Enterobacter sp. (strain 638).